The primary structure comprises 83 residues: Cytochrome b559 subunit alpha (83 aa).

Residues V21 to W35 form a helical membrane-spanning segment. Residue H23 coordinates heme.

The protein belongs to the PsbE/PsbF family. In terms of assembly, heterodimer of an alpha subunit and a beta subunit. PSII is composed of 1 copy each of membrane proteins PsbA, PsbB, PsbC, PsbD, PsbE, PsbF, PsbH, PsbI, PsbJ, PsbK, PsbL, PsbM, PsbT, PsbX, PsbY, PsbZ, Psb30/Ycf12, at least 3 peripheral proteins of the oxygen-evolving complex and a large number of cofactors. It forms dimeric complexes. Heme b is required as a cofactor.

It is found in the plastid. The protein resides in the chloroplast thylakoid membrane. This b-type cytochrome is tightly associated with the reaction center of photosystem II (PSII). PSII is a light-driven water:plastoquinone oxidoreductase that uses light energy to abstract electrons from H(2)O, generating O(2) and a proton gradient subsequently used for ATP formation. It consists of a core antenna complex that captures photons, and an electron transfer chain that converts photonic excitation into a charge separation. This is Cytochrome b559 subunit alpha from Nephroselmis olivacea (Green alga).